A 306-amino-acid polypeptide reads, in one-letter code: Elongation factor Ts (306 aa).

An involved in Mg(2+) ion dislocation from EF-Tu region spans residues 80–83 (TDFV).

It belongs to the EF-Ts family.

Its subcellular location is the cytoplasm. Functionally, associates with the EF-Tu.GDP complex and induces the exchange of GDP to GTP. It remains bound to the aminoacyl-tRNA.EF-Tu.GTP complex up to the GTP hydrolysis stage on the ribosome. This Clostridium acetobutylicum (strain ATCC 824 / DSM 792 / JCM 1419 / IAM 19013 / LMG 5710 / NBRC 13948 / NRRL B-527 / VKM B-1787 / 2291 / W) protein is Elongation factor Ts.